Here is a 777-residue protein sequence, read N- to C-terminus: Intraflagellar transport protein 80 homolog (777 aa).

7 WD repeats span residues 12–50 (KHQE…TSLI), 104–143 (AHCG…RSTL), 145–185 (QQGI…LQWK), 186–225 (AHDG…LYGS), 227–265 (PHEH…YALE), 267–306 (PNTG…WEWK), and 504–542 (KLGT…YVDR). The disordered stretch occupies residues 758 to 777 (TKERDRSSSGQSSKNTGLKP). Residues 765 to 777 (SSGQSSKNTGLKP) show a composition bias toward polar residues.

In terms of assembly, component of the IFT complex B, at least composed of IFT20, IFT22, IFT25, IFT27, IFT46, IFT52, TRAF3IP1/IFT54, IFT57, IFT74, IFT80, IFT81, and IFT88. Interacts with IFT88. Interacts with IFT57 and IFT70B.

It localises to the cytoplasm. It is found in the cytoskeleton. The protein localises to the cilium basal body. The protein resides in the cilium axoneme. Functionally, component of the intraflagellar transport (IFT) complex B, which is essential for the development and maintenance of motile and sensory cilia. In Rattus norvegicus (Rat), this protein is Intraflagellar transport protein 80 homolog (Ift80).